The primary structure comprises 94 residues: Small ribosomal subunit protein uS19 (94 aa).

Belongs to the universal ribosomal protein uS19 family.

In terms of biological role, protein S19 forms a complex with S13 that binds strongly to the 16S ribosomal RNA. This chain is Small ribosomal subunit protein uS19, found in Moorella thermoacetica (strain ATCC 39073 / JCM 9320).